The chain runs to 498 residues: ATP synthase subunit beta, chloroplastic (498 aa).

172 to 179 (GGAGVGKT) serves as a coordination point for ATP.

It belongs to the ATPase alpha/beta chains family. As to quaternary structure, F-type ATPases have 2 components, CF(1) - the catalytic core - and CF(0) - the membrane proton channel. CF(1) has five subunits: alpha(3), beta(3), gamma(1), delta(1), epsilon(1). CF(0) has four main subunits: a(1), b(1), b'(1) and c(9-12).

It is found in the plastid. The protein resides in the chloroplast thylakoid membrane. The enzyme catalyses ATP + H2O + 4 H(+)(in) = ADP + phosphate + 5 H(+)(out). In terms of biological role, produces ATP from ADP in the presence of a proton gradient across the membrane. The catalytic sites are hosted primarily by the beta subunits. This Lactuca sativa (Garden lettuce) protein is ATP synthase subunit beta, chloroplastic.